The sequence spans 181 residues: Endoribonuclease YbeY (181 aa).

His-120, His-124, and His-130 together coordinate Zn(2+). The interval 157 to 181 (AGGKRPAGGADGADGAGEPGPTAAR) is disordered. The segment covering 161–174 (RPAGGADGADGAGE) has biased composition (gly residues).

It belongs to the endoribonuclease YbeY family. It depends on Zn(2+) as a cofactor.

It is found in the cytoplasm. Single strand-specific metallo-endoribonuclease involved in late-stage 70S ribosome quality control and in maturation of the 3' terminus of the 16S rRNA. In Frankia alni (strain DSM 45986 / CECT 9034 / ACN14a), this protein is Endoribonuclease YbeY.